The primary structure comprises 148 residues: SsrA-binding protein (148 aa).

Belongs to the SmpB family.

Its subcellular location is the cytoplasm. In terms of biological role, required for rescue of stalled ribosomes mediated by trans-translation. Binds to transfer-messenger RNA (tmRNA), required for stable association of tmRNA with ribosomes. tmRNA and SmpB together mimic tRNA shape, replacing the anticodon stem-loop with SmpB. tmRNA is encoded by the ssrA gene; the 2 termini fold to resemble tRNA(Ala) and it encodes a 'tag peptide', a short internal open reading frame. During trans-translation Ala-aminoacylated tmRNA acts like a tRNA, entering the A-site of stalled ribosomes, displacing the stalled mRNA. The ribosome then switches to translate the ORF on the tmRNA; the nascent peptide is terminated with the 'tag peptide' encoded by the tmRNA and targeted for degradation. The ribosome is freed to recommence translation, which seems to be the essential function of trans-translation. The polypeptide is SsrA-binding protein (Ehrlichia ruminantium (strain Welgevonden)).